A 221-amino-acid polypeptide reads, in one-letter code: UPF0319 protein CGSHiGG_02140 (221 aa).

Positions 1–21 are cleaved as a signal peptide; it reads MKLRAVVLGLATLCTSTATFA.

This sequence belongs to the UPF0319 family.

The sequence is that of UPF0319 protein CGSHiGG_02140 from Haemophilus influenzae (strain PittGG).